Reading from the N-terminus, the 289-residue chain is dTDP-rhamnosyl transferase RfbG (289 aa).

It belongs to the glycosyltransferase 2 family.

It participates in bacterial outer membrane biogenesis; lipopolysaccharide biosynthesis. The polypeptide is dTDP-rhamnosyl transferase RfbG (rfbG) (Shigella flexneri).